We begin with the raw amino-acid sequence, 307 residues long: Nucleotide-binding protein Acid345_3782 (307 aa).

31–38 is an ATP binding site; it reads GLSGSGKA. 81-84 is a binding site for GTP; sequence DIRE.

This sequence belongs to the RapZ-like family.

Displays ATPase and GTPase activities. This is Nucleotide-binding protein Acid345_3782 from Koribacter versatilis (strain Ellin345).